The following is a 347-amino-acid chain: MKPWAAFHLIFLVASSVEGDVSNYGTGGTQDTEPTCCTEHQCISDKIILQGQPGIPGIPGVPGINGSEGLKGDPGPQGLPGETGFDGIPGVAGPKGDKGDQGDKGDKGDKGDKGDACILDDCPPTDVEVRNCQDLLEHGEILNGWYTIYPTKENPMVVFCDMETDGGGWLVFQRRQDGSVDFYLDWESYKKGFGKQESEFWLGNDKIHLLTSSGTQQLRIDLEDFEGSRTFAKYSSFSIGDENEKYRLIVGSYLDGSMNDSFRIHNGHSFSTKDRDNDTNKGNCAMMYKGAWWYFHCHHANLNGLYYKGKHANYADGINWRSGKGYYYSYKYADMKIRPQQSETTVS.

The signal sequence occupies residues 1-19 (MKPWAAFHLIFLVASSVEG). Positions 57–114 (GIPGVPGINGSEGLKGDPGPQGLPGETGFDGIPGVAGPKGDKGDQGDKGDKGDKGDKG) constitute a Collagen-like domain. Residues 62 to 115 (PGINGSEGLKGDPGPQGLPGETGFDGIPGVAGPKGDKGDQGDKGDKGDKGDKGD) are disordered. Positions 95–115 (KGDKGDQGDKGDKGDKGDKGD) are enriched in basic and acidic residues. The 221-residue stretch at 121–341 (DCPPTDVEVR…YADMKIRPQQ (221 aa)) folds into the Fibrinogen C-terminal domain. 2 disulfide bridges follow: cysteine 132–cysteine 160 and cysteine 284–cysteine 297.

It belongs to the ficolin lectin family. Veficolin subfamily. Post-translationally, hydroxylated. As to expression, expressed by the venom duct.

The protein localises to the secreted. Its function is as follows. Initiates complement activation and/or interferes in platelet aggregation and/or blood coagulation. The polypeptide is Ryncolin-3 (Cerberus rynchops (Dog-faced water snake)).